Here is a 602-residue protein sequence, read N- to C-terminus: Pentatricopeptide repeat-containing protein At5g11310, mitochondrial (602 aa).

The transit peptide at 1-35 (MNSLFTAFRRNLLLNPNPHRNFFLHRLLSSSRRSS) directs the protein to the mitochondrion. 11 PPR repeats span residues 134–165 (SPSLFDSVVNSLCKAREFEIAWSLVFDRVRSD), 172–202 (SADTFIVLIRRYARAGMVQQAIRAFEFARSY), 211–241 (ELRLLEVLLDALCKEGHVREASMYLERIGGT), 249–283 (SVRIFNILLNGWFRSRKLKQAEKLWEEMKAMNVKP), 284–318 (TVVTYGTLIEGYCRMRRVQIAMEVLEEMKMAEMEI), 319–353 (NFMVFNPIIDGLGEAGRLSEALGMMERFFVCESGP), 354–388 (TIVTYNSLVKNFCKAGDLPGASKILKMMMTRGVDP), 389–423 (TTTTYNHFFKYFSKHNKTEEGMNLYFKLIEAGHSP), 424–458 (DRLTYHLILKMLCEDGKLSLAMQVNKEMKNRGIDP), 459–493 (DLLTTTMLIHLLCRLEMLEEAFEEFDNAVRRGIIP), and 494–528 (QYITFKMIDNGLRSKGMSDMAKRLSSLMSSLPHSK).

Belongs to the PPR family. P subfamily.

It is found in the mitochondrion. The sequence is that of Pentatricopeptide repeat-containing protein At5g11310, mitochondrial from Arabidopsis thaliana (Mouse-ear cress).